Here is a 308-residue protein sequence, read N- to C-terminus: D-alanine--D-alanine ligase (308 aa).

The ATP-grasp domain maps to 102 to 302 (KKVAAAAGIP…FGDLVSWMVE (201 aa)). Position 128 to 183 (128 to 183 (PLQPPYVVKPVREGSSFGVVIVKEDQSHPPQILTSSEWPFGNQVMVERYIHGRELT)) interacts with ATP. Residues Asp252, Glu269, and Asn271 each coordinate Mg(2+).

Belongs to the D-alanine--D-alanine ligase family. Mg(2+) is required as a cofactor. Requires Mn(2+) as cofactor.

Its subcellular location is the cytoplasm. The catalysed reaction is 2 D-alanine + ATP = D-alanyl-D-alanine + ADP + phosphate + H(+). It functions in the pathway cell wall biogenesis; peptidoglycan biosynthesis. Cell wall formation. In Agrobacterium fabrum (strain C58 / ATCC 33970) (Agrobacterium tumefaciens (strain C58)), this protein is D-alanine--D-alanine ligase.